The chain runs to 934 residues: Protein unc-45 homolog B (934 aa).

TPR repeat units follow at residues 9–42 (SVQLKEEGNKHFQAGEIDQAIDCYTKAIKTCKKE), 48–81 (AVIYRNRSACFLKKENYSNAASDATKAIDVDAAD), and 83–115 (KALYRRCQAFEKLGKLDMAFKDVQRCATIEPKN). 3 ARM repeats span residues 174-213 (DAGAERIFQNNGVPLLMQLIDTGKPEMILAAIRTLSGMCT), 216-255 (RARATAIIHSVGISKLCSIMAVDNEEIALATANLFQCVND), and 753-792 (DKLRVKILKEKALPEIENYMFEDHEQIRQAATECMCNLVC).

Interacts with apobec2a, apobec2b, hsp90a.1, hsp90a.2, hsp90ab1 and myosin. As to expression, expressed in striated muscle tissue including somites, heart and craniofacial muscle. Detected in mesoderm adjacent to the dorsal midline during the late gastrula stages and in somitic mesoderm during development of trunk skeletal muscle. Also expressed in cranial skeletal muscle and in cardiac and smooth muscle. Detected in somitic muscle and heart primordium of 24 hour embryos. At later stages, expressed in muscles of pectoral fins, jaw, branchial arches and eye.

Its subcellular location is the cytoplasm. It is found in the myofibril. The protein localises to the sarcomere. The protein resides in the z line. It localises to the a band. Its subcellular location is the perinuclear region. In terms of biological role, acts as a co-chaperone for HSP90 and is required for proper folding of the myosin motor domain. Plays a role in sarcomere formation during muscle cell development. Required for myoseptal integrity, myofiber attachment, motility and craniofacial development. Is necessary for normal early lens development. The protein is Protein unc-45 homolog B of Danio rerio (Zebrafish).